Reading from the N-terminus, the 1086-residue chain is WD repeat-containing protein 64 (1086 aa).

WD repeat units lie at residues 129 to 168 (RRRD…WITG), 170 to 199 (DYLG…SSQE), 321 to 360 (AMPR…KPVG), 364 to 403 (GHMF…VLQV), 411 to 448 (PGDM…QDTK), 453 to 492 (THER…QIYQ), 498 to 537 (GLSI…EMKM), 560 to 602 (QVKQ…PYLQ), and 642 to 683 (IVDV…VKEI). A disordered region spans residues 724–749 (ICSSTQCDSSKGPQSSKGSKQSIHDA). Residues 732–744 (SSKGPQSSKGSKQ) show a composition bias toward low complexity. 3 WD repeats span residues 765–806 (ASRK…KDML), 809–850 (TKHS…DPPH), and 863–902 (AHSL…YCGY). The interval 1047 to 1069 (DKVKREEAPEMTEGSRRKSLKRN) is disordered. Residues 1049-1062 (VKREEAPEMTEGSR) are compositionally biased toward basic and acidic residues.

The sequence is that of WD repeat-containing protein 64 (Wdr64) from Mus musculus (Mouse).